Consider the following 405-residue polypeptide: 11-beta-hydroxysteroid dehydrogenase type 2 (405 aa).

82-111 (TRAVLITGCDSGFGKETAKKLDSMGFTVLA) provides a ligand contact to NAD(+). Position 219 (serine 219) interacts with substrate. Residue tyrosine 232 is the Proton acceptor of the active site. Residues 335–339 (RRRYY) are essential for protein stability. A compositionally biased stretch (low complexity) spans 377–387 (QPGQPGTTPPQ). Residues 377–405 (QPGQPGTTPPQDAAQDPNLSPGPSPAVAR) are disordered. Positions 396–405 (SPGPSPAVAR) are enriched in pro residues.

This sequence belongs to the short-chain dehydrogenases/reductases (SDR) family. In terms of assembly, interacts with ligand-free cytoplasmic NR3C2. Expressed in kidney, placenta, pancreas, prostate, ovary, small intestine and colon, and in lower levels in the spleen and testis. At midgestation, expressed at high levels in placenta and in fetal kidney and, at much lower levels, in fetal lung and testis.

It is found in the microsome. The protein localises to the endoplasmic reticulum. The catalysed reaction is an 11beta-hydroxysteroid + NAD(+) = an 11-oxosteroid + NADH + H(+). It catalyses the reaction cortisol + NAD(+) = cortisone + NADH + H(+). It carries out the reaction corticosterone + NAD(+) = 11-dehydrocorticosterone + NADH + H(+). The enzyme catalyses 11beta,17beta-dihydroxyandrost-4-ene-3-one + NAD(+) = 17beta-hydroxyandrost-4-ene-3,11-dione + NADH + H(+). The catalysed reaction is 11beta-hydroxyandrost-4-ene-3,17-dione + NAD(+) = androst-4-ene-3,11,17-trione + NADH + H(+). Its pathway is steroid metabolism. Inhibited by glycyrrhetinic acid (derived from liquorice). Its function is as follows. Catalyzes the conversion of biologically active 11beta-hydroxyglucocorticoids (11beta-hydroxysteroid) such as cortisol, to inactive 11-ketoglucocorticoids (11-oxosteroid) such as cortisone, in the presence of NAD(+). Functions as a dehydrogenase (oxidase), thereby decreasing the concentration of active glucocorticoids, thus protecting the nonselective mineralocorticoid receptor from occupation by glucocorticoids. Plays an important role in maintaining glucocorticoids balance during preimplantation and protects the fetus from excessive maternal corticosterone exposure. Catalyzes the oxidation of 11beta-hydroxytestosterone (11beta,17beta-dihydroxyandrost-4-ene-3-one) to 11-ketotestosterone (17beta-hydroxyandrost-4-ene-3,11-dione), a major bioactive androgen. Catalyzes the conversion of 11beta-hydroxyandrostenedione (11beta-hydroxyandrost-4-ene-3,17-dione) to 11-ketoandrostenedione (androst-4-ene-3,11,17-trione), which can be further metabolized to 11-ketotestosterone. Converts 7-beta-25-dihydroxycholesterol to 7-oxo-25-hydroxycholesterol in vitro. 7-beta-25-dihydroxycholesterol (not 7-oxo-25-hydroxycholesterol) acts as a ligand for the G-protein-coupled receptor (GPCR) Epstein-Barr virus-induced gene 2 (EBI2) and may thereby regulate immune cell migration. May protect ovulating oocytes and fertilizing spermatozoa from the adverse effects of cortisol. The chain is 11-beta-hydroxysteroid dehydrogenase type 2 from Homo sapiens (Human).